A 407-amino-acid chain; its full sequence is Elongation factor Tu (407 aa).

Residues 10–217 (KPHVNVGTIG…ALDSYIPEPE (208 aa)) enclose the tr-type G domain. The interval 19–26 (GHVDHGKT) is G1. Residue 19–26 (GHVDHGKT) coordinates GTP. T26 provides a ligand contact to Mg(2+). A G2 region spans residues 60–64 (GITIA). The G3 stretch occupies residues 81–84 (DCPG). Residues 81–85 (DCPGH) and 136–139 (NKAD) contribute to the GTP site. The interval 136–139 (NKAD) is G4. The segment at 184–186 (SAL) is G5.

The protein belongs to the TRAFAC class translation factor GTPase superfamily. Classic translation factor GTPase family. EF-Tu/EF-1A subfamily. Monomer.

The protein localises to the cytoplasm. The enzyme catalyses GTP + H2O = GDP + phosphate + H(+). In terms of biological role, GTP hydrolase that promotes the GTP-dependent binding of aminoacyl-tRNA to the A-site of ribosomes during protein biosynthesis. The protein is Elongation factor Tu of Saccharophagus degradans (strain 2-40 / ATCC 43961 / DSM 17024).